Reading from the N-terminus, the 596-residue chain is Transcription factor IIIB 70 kDa subunit (596 aa).

The TFIIB-type zinc finger occupies 1-33 (MPVCKNCHGTEFERDLSNANNDLVCKACGVVSE). Zn(2+) contacts are provided by cysteine 4, cysteine 7, cysteine 25, and cysteine 28. Tandem repeats lie at residues 90–166 (VSYA…KMVK) and 185–264 (FAEK…EFKN). Disordered regions lie at residues 363–421 (GENI…NESG) and 509–534 (IATGNTSVKKKRTRRRNNTRSDEPTK). The segment covering 365–375 (NIYHEGSENET) has biased composition (basic and acidic residues). Residues serine 381 and serine 384 each carry the phosphoserine modification. Residues 388-421 (EHVEGEDKETEGTEEKVKKVKTKTSEEKKENESG) show a composition bias toward basic and acidic residues. The segment covering 516 to 526 (VKKKRTRRRNN) has biased composition (basic residues).

Belongs to the TFIIB family. TFIIIB comprises the TATA-binding protein (TBP), the B-related factor (BRF) and the B' component (TFC5).

Its subcellular location is the nucleus. Its function is as follows. General activator of RNA polymerase III transcription. Interacts with TBP. Binds to Pol III subunit C34 and to the TAU135 component of TFIIIC. This Saccharomyces cerevisiae (strain ATCC 204508 / S288c) (Baker's yeast) protein is Transcription factor IIIB 70 kDa subunit (BRF1).